Consider the following 380-residue polypeptide: tRNA-specific 2-thiouridylase MnmA (380 aa).

ATP-binding positions include A25–S32 and M51. C119 acts as the Nucleophile in catalysis. Residues C119 and C216 are joined by a disulfide bond. Position 143 (G143) interacts with ATP. Residues K166 to Q168 form an interaction with tRNA region. The Cysteine persulfide intermediate role is filled by C216. Positions R320–Y321 are interaction with tRNA.

The protein belongs to the MnmA/TRMU family.

It localises to the cytoplasm. The catalysed reaction is S-sulfanyl-L-cysteinyl-[protein] + uridine(34) in tRNA + AH2 + ATP = 2-thiouridine(34) in tRNA + L-cysteinyl-[protein] + A + AMP + diphosphate + H(+). Catalyzes the 2-thiolation of uridine at the wobble position (U34) of tRNA, leading to the formation of s(2)U34. In Deinococcus radiodurans (strain ATCC 13939 / DSM 20539 / JCM 16871 / CCUG 27074 / LMG 4051 / NBRC 15346 / NCIMB 9279 / VKM B-1422 / R1), this protein is tRNA-specific 2-thiouridylase MnmA.